We begin with the raw amino-acid sequence, 276 residues long: Putative translation initiation factor eIF-2B subunit 2-like (276 aa).

This sequence belongs to the eIF-2B alpha/beta/delta subunits family. In terms of assembly, complex of two different subunits.

Catalyzes the exchange of initiation factor 2-bound GDP for GTP. This Pyrococcus horikoshii (strain ATCC 700860 / DSM 12428 / JCM 9974 / NBRC 100139 / OT-3) protein is Putative translation initiation factor eIF-2B subunit 2-like.